The sequence spans 765 residues: Periplasmic beta-glucosidase (765 aa).

An N-terminal signal peptide occupies residues 1–20; that stretch reads MKWLCSVGIAVSLALQPALA. Asp-287 is an active-site residue.

It belongs to the glycosyl hydrolase 3 family.

The protein resides in the periplasm. The enzyme catalyses Hydrolysis of terminal, non-reducing beta-D-glucosyl residues with release of beta-D-glucose.. The sequence is that of Periplasmic beta-glucosidase (bglX) from Escherichia coli (strain K12).